A 394-amino-acid chain; its full sequence is Nuclear hormone receptor family member nhr-18 (394 aa).

Residues 8 to 83 (SGSCEVCGDK…VGMDTRRFQT (76 aa)) constitute a DNA-binding region (nuclear receptor). NR C4-type zinc fingers lie at residues 11-31 (CEVCGDKTSGRHFGVMSCRAC) and 48-71 (CPNGTCHTSVNGKFNCKQCRLKKC). The NR LBD domain maps to 134–394 (MLQKPTNHVL…FSHPEMFEAT (261 aa)).

Belongs to the nuclear hormone receptor family.

It is found in the nucleus. Functionally, orphan nuclear receptor. The chain is Nuclear hormone receptor family member nhr-18 (nhr-18) from Caenorhabditis elegans.